A 290-amino-acid polypeptide reads, in one-letter code: tRNA (guanine-N(7)-)-methyltransferase (290 aa).

2 stretches are compositionally biased toward basic and acidic residues: residues 1 to 12 (MSDSLHTPEEPR) and 20 to 43 (AHAHDGSLRHTRAKGEPRFPDGPK). The disordered stretch occupies residues 1–49 (MSDSLHTPEEPRPGPGEQLAHAHDGSLRHTRAKGEPRFPDGPKADPAGS). S-adenosyl-L-methionine is bound by residues glutamate 104, aspartate 129, aspartate 156, and aspartate 179. Aspartate 179 is an active-site residue. Substrate-binding positions include lysine 183, aspartate 215, and 252–255 (TRFE).

This sequence belongs to the class I-like SAM-binding methyltransferase superfamily. TrmB family.

The catalysed reaction is guanosine(46) in tRNA + S-adenosyl-L-methionine = N(7)-methylguanosine(46) in tRNA + S-adenosyl-L-homocysteine. Its pathway is tRNA modification; N(7)-methylguanine-tRNA biosynthesis. Functionally, catalyzes the formation of N(7)-methylguanine at position 46 (m7G46) in tRNA. The polypeptide is tRNA (guanine-N(7)-)-methyltransferase (Streptomyces avermitilis (strain ATCC 31267 / DSM 46492 / JCM 5070 / NBRC 14893 / NCIMB 12804 / NRRL 8165 / MA-4680)).